The following is a 174-amino-acid chain: Nucleoside-triphosphatase THEP1 (174 aa).

ATP contacts are provided by residues 8-15 and 99-106; these read GIPGIGKS and LIVIDEVG.

The protein belongs to the THEP1 NTPase family.

The catalysed reaction is a ribonucleoside 5'-triphosphate + H2O = a ribonucleoside 5'-diphosphate + phosphate + H(+). Its function is as follows. Has nucleotide phosphatase activity towards ATP, GTP, CTP, TTP and UTP. May hydrolyze nucleoside diphosphates with lower efficiency. The protein is Nucleoside-triphosphatase THEP1 of Methanosarcina barkeri (strain Fusaro / DSM 804).